Reading from the N-terminus, the 160-residue chain is Nucleotide-binding protein ASA_3207 (160 aa).

Belongs to the YajQ family.

Its function is as follows. Nucleotide-binding protein. The sequence is that of Nucleotide-binding protein ASA_3207 from Aeromonas salmonicida (strain A449).